Consider the following 83-residue polypeptide: Putative protein T-ENOL (83 aa).

Residues 1-33 are disordered; it reads MASTPMGNEGEKKSSWPSQAAPSLRGGPASLSR.

This Homo sapiens (Human) protein is Putative protein T-ENOL.